The chain runs to 282 residues: Pantothenate synthetase (282 aa).

Residue 30-37 (MGGLHQGH) coordinates ATP. His37 functions as the Proton donor in the catalytic mechanism. Gln61 serves as a coordination point for (R)-pantoate. Gln61 contacts beta-alanine. Position 146-149 (146-149 (GQKD)) interacts with ATP. Position 152 (Gln152) interacts with (R)-pantoate. ATP-binding positions include Ile175 and 183-186 (MSTR).

This sequence belongs to the pantothenate synthetase family. As to quaternary structure, homodimer.

It is found in the cytoplasm. It carries out the reaction (R)-pantoate + beta-alanine + ATP = (R)-pantothenate + AMP + diphosphate + H(+). It functions in the pathway cofactor biosynthesis; (R)-pantothenate biosynthesis; (R)-pantothenate from (R)-pantoate and beta-alanine: step 1/1. Its function is as follows. Catalyzes the condensation of pantoate with beta-alanine in an ATP-dependent reaction via a pantoyl-adenylate intermediate. The polypeptide is Pantothenate synthetase (Vesicomyosocius okutanii subsp. Calyptogena okutanii (strain HA)).